We begin with the raw amino-acid sequence, 289 residues long: MVAIDGLPPLRDVIAAHGLSARKALGQNFLLDLNLTAKIARLAGDLTSVDVLEVGPGPGGLTRGLLAEGARRVVAVEKDPRCLPVLAEIEAIYPGRLKVLNADALELDWAADLQAPRKIVANLPYNVGTELLVRWLTPASWPPPWESLTLMFQREVAERIVAQPGSKTYGRLAILSQWRADPRIVMGLPPEAFTPPPKVHSAVVHFTALPAPRFPADARVLTRVVAAAFGQRRKMLRAALKGLAPDIEDRLVAAGLKPTDRAEQVPLEGFCALARVMEDVITPSHGREA.

S-adenosyl-L-methionine is bound by residues Asn-28, Leu-30, Gly-55, Glu-77, Asp-103, and Asn-122.

Belongs to the class I-like SAM-binding methyltransferase superfamily. rRNA adenine N(6)-methyltransferase family. RsmA subfamily.

It localises to the cytoplasm. The catalysed reaction is adenosine(1518)/adenosine(1519) in 16S rRNA + 4 S-adenosyl-L-methionine = N(6)-dimethyladenosine(1518)/N(6)-dimethyladenosine(1519) in 16S rRNA + 4 S-adenosyl-L-homocysteine + 4 H(+). Specifically dimethylates two adjacent adenosines (A1518 and A1519) in the loop of a conserved hairpin near the 3'-end of 16S rRNA in the 30S particle. May play a critical role in biogenesis of 30S subunits. In Jannaschia sp. (strain CCS1), this protein is Ribosomal RNA small subunit methyltransferase A.